Consider the following 189-residue polypeptide: Large ribosomal subunit protein uL13 (189 aa).

It belongs to the universal ribosomal protein uL13 family.

This is Large ribosomal subunit protein uL13 (rpl13a) from Salmo trutta (Brown trout).